Consider the following 146-residue polypeptide: Large ribosomal subunit protein uL15 (146 aa).

Over residues Met-1 to Lys-13 the composition is skewed to basic and acidic residues. A disordered region spans residues Met-1–Gln-54. Composition is skewed to gly residues over residues Arg-21 to Ala-31 and Ser-42 to Gly-52.

It belongs to the universal ribosomal protein uL15 family. As to quaternary structure, part of the 50S ribosomal subunit.

Functionally, binds to the 23S rRNA. In Clostridium novyi (strain NT), this protein is Large ribosomal subunit protein uL15.